We begin with the raw amino-acid sequence, 403 residues long: S-adenosylmethionine synthase (403 aa).

His15 provides a ligand contact to ATP. Asp17 contacts Mg(2+). A K(+)-binding site is contributed by Glu43. Glu56 and Gln99 together coordinate L-methionine. The segment at 99 to 109 is flexible loop; sequence QSPDINQGVDR. Residues 166-168, 232-233, Asp241, 247-248, Ala264, and Lys268 contribute to the ATP site; these read DAK, KF, and RK. Residue Asp241 participates in L-methionine binding. Lys272 contributes to the L-methionine binding site.

Belongs to the AdoMet synthase family. Homotetramer; dimer of dimers. Mg(2+) serves as cofactor. The cofactor is K(+).

It is found in the cytoplasm. The enzyme catalyses L-methionine + ATP + H2O = S-adenosyl-L-methionine + phosphate + diphosphate. It participates in amino-acid biosynthesis; S-adenosyl-L-methionine biosynthesis; S-adenosyl-L-methionine from L-methionine: step 1/1. Catalyzes the formation of S-adenosylmethionine (AdoMet) from methionine and ATP. The overall synthetic reaction is composed of two sequential steps, AdoMet formation and the subsequent tripolyphosphate hydrolysis which occurs prior to release of AdoMet from the enzyme. The protein is S-adenosylmethionine synthase of Xanthomonas campestris pv. campestris (strain ATCC 33913 / DSM 3586 / NCPPB 528 / LMG 568 / P 25).